The following is a 348-amino-acid chain: Isopentenyl-diphosphate delta-isomerase (348 aa).

5–6 (RK) provides a ligand contact to substrate. Residues Ser61, 62 to 64 (SMT), Ser92, and Asn120 contribute to the FMN site. Position 92 to 94 (92 to 94 (SMR)) interacts with substrate. Gln159 provides a ligand contact to substrate. Glu160 contributes to the Mg(2+) binding site. FMN-binding positions include Lys189, Ser214, Thr219, 269-271 (GLR), and 290-291 (AR).

The protein belongs to the IPP isomerase type 2 family. As to quaternary structure, homooctamer. Dimer of tetramers. It depends on FMN as a cofactor. The cofactor is NADPH. Mg(2+) serves as cofactor.

Its subcellular location is the cytoplasm. The catalysed reaction is isopentenyl diphosphate = dimethylallyl diphosphate. In terms of biological role, involved in the biosynthesis of isoprenoids. Catalyzes the 1,3-allylic rearrangement of the homoallylic substrate isopentenyl (IPP) to its allylic isomer, dimethylallyl diphosphate (DMAPP). In Thermoplasma acidophilum (strain ATCC 25905 / DSM 1728 / JCM 9062 / NBRC 15155 / AMRC-C165), this protein is Isopentenyl-diphosphate delta-isomerase.